Here is a 538-residue protein sequence, read N- to C-terminus: Hydroxylamine reductase (538 aa).

Residues cysteine 3, cysteine 6, cysteine 15, and cysteine 21 each contribute to the [4Fe-4S] cluster site. Hybrid [4Fe-2O-2S] cluster-binding residues include histidine 239, glutamate 263, cysteine 307, cysteine 394, cysteine 422, cysteine 447, glutamate 481, and lysine 483. Residue cysteine 394 is modified to Cysteine persulfide.

It belongs to the HCP family. Requires [4Fe-4S] cluster as cofactor. It depends on hybrid [4Fe-2O-2S] cluster as a cofactor.

It is found in the cytoplasm. The catalysed reaction is A + NH4(+) + H2O = hydroxylamine + AH2 + H(+). Functionally, catalyzes the reduction of hydroxylamine to form NH(3) and H(2)O. This is Hydroxylamine reductase from Solidesulfovibrio magneticus (strain ATCC 700980 / DSM 13731 / RS-1) (Desulfovibrio magneticus).